Reading from the N-terminus, the 80-residue chain is Large ribosomal subunit protein uL24 (80 aa).

This sequence belongs to the universal ribosomal protein uL24 family. In terms of assembly, part of the 50S ribosomal subunit.

One of two assembly initiator proteins, it binds directly to the 5'-end of the 23S rRNA, where it nucleates assembly of the 50S subunit. In terms of biological role, one of the proteins that surrounds the polypeptide exit tunnel on the outside of the subunit. This Prosthecochloris aestuarii (strain DSM 271 / SK 413) protein is Large ribosomal subunit protein uL24.